The sequence spans 1009 residues: Probable beta-galactosidase B (1009 aa).

The first 27 residues, methionine 1–alanine 27, serve as a signal peptide directing secretion. Residue tyrosine 96 participates in substrate binding. Asparagine 106 carries an N-linked (GlcNAc...) asparagine glycan. 4 residues coordinate substrate: asparagine 141, alanine 142, glutamate 143, and asparagine 201. The active-site Proton donor is the glutamate 202. Tyrosine 271 provides a ligand contact to substrate. Cysteine 277 and cysteine 330 form a disulfide bridge. Glutamate 314 (nucleophile) is an active-site residue. Position 379 (tyrosine 379) interacts with substrate. 12 N-linked (GlcNAc...) asparagine glycosylation sites follow: asparagine 467, asparagine 495, asparagine 547, asparagine 593, asparagine 632, asparagine 672, asparagine 707, asparagine 775, asparagine 782, asparagine 789, asparagine 795, and asparagine 914.

It belongs to the glycosyl hydrolase 35 family.

The protein localises to the secreted. It catalyses the reaction Hydrolysis of terminal non-reducing beta-D-galactose residues in beta-D-galactosides.. In terms of biological role, cleaves beta-linked terminal galactosyl residues from gangliosides, glycoproteins, and glycosaminoglycans. The chain is Probable beta-galactosidase B (lacB) from Pyrenophora tritici-repentis (strain Pt-1C-BFP) (Wheat tan spot fungus).